The primary structure comprises 274 residues: Orotidine 5'-phosphate decarboxylase (274 aa).

The Proton donor role is filled by Lys-96.

Belongs to the OMP decarboxylase family. Type 2 subfamily.

It catalyses the reaction orotidine 5'-phosphate + H(+) = UMP + CO2. It functions in the pathway pyrimidine metabolism; UMP biosynthesis via de novo pathway; UMP from orotate: step 2/2. The chain is Orotidine 5'-phosphate decarboxylase from Bacteroides fragilis (strain ATCC 25285 / DSM 2151 / CCUG 4856 / JCM 11019 / LMG 10263 / NCTC 9343 / Onslow / VPI 2553 / EN-2).